The primary structure comprises 356 residues: Putative [LysW]-L-2-aminoadipate/[LysW]-L-glutamate phosphate reductase (356 aa).

Residue 11–14 (SGYT) coordinates NADP(+). Residue Cys157 is part of the active site. Residue Asn323 participates in NADP(+) binding.

The protein belongs to the NAGSA dehydrogenase family. Type 1 subfamily. LysY sub-subfamily.

It localises to the cytoplasm. It catalyses the reaction [amino-group carrier protein]-C-terminal-N-(1-carboxy-5-oxopentan-1-yl)-L-glutamine + phosphate + NADP(+) = [amino-group carrier protein]-C-terminal-N-(1-carboxy-5-phosphooxy-5-oxopentan-1-yl)-L-glutamine + NADPH + H(+). The catalysed reaction is [amino-group carrier protein]-C-terminal-gamma-(L-glutamyl-5-semialdehyde)-L-glutamate + phosphate + NADP(+) = [amino-group carrier protein]-C-terminal-gamma-(5-phospho-L-glutamyl)-L-glutamate + NADPH + H(+). It participates in amino-acid biosynthesis; L-lysine biosynthesis via AAA pathway; L-lysine from L-alpha-aminoadipate (Thermus route): step 3/5. It functions in the pathway amino-acid biosynthesis; L-arginine biosynthesis. Its function is as follows. Involved in both the arginine and lysine biosynthetic pathways. The protein is Putative [LysW]-L-2-aminoadipate/[LysW]-L-glutamate phosphate reductase of Ignicoccus hospitalis (strain KIN4/I / DSM 18386 / JCM 14125).